Consider the following 1279-residue polypeptide: Sterol regulatory element-binding protein cleavage-activating protein (1279 aa).

Residues 1–18 lie on the Cytoplasmic side of the membrane; that stretch reads MTLTERLREKISRAFYNH. The chain crosses the membrane as a helical span at residues 19–39; that stretch reads GLLCASYPIPIILFTGFCILA. At 40 to 279 the chain is on the lumenal side; that stretch reads CCYPLLKLPL…SLVHVHFKEE (240 aa). The interval 46–284 is loop-1; it reads KLPLPGTGPV…HFKEEIGVAE (239 aa). Residues 60–80 are disordered; sequence PVKDYSPPPVDSDRKQGEPTE. Asparagine 263 is a glycosylation site (N-linked (GlcNAc...) asparagine). Residues 280–300 form a helical membrane-spanning segment; it reads IGVAELIPLVTTYIILFAYIY. The SSD domain maps to 284-442; sequence ELIPLVTTYI…MLFFTTVLSI (159 aa). At 301–312 the chain is on the cytoplasmic side; the sequence is FSTRKIDMVKSK. The chain crosses the membrane as a helical span at residues 313–333; it reads WGLALAAVVTVLSSLLMSVGL. The Lumenal portion of the chain corresponds to 334 to 344; sequence CTLFGLTPTLN. Residues 345–365 form a helical membrane-spanning segment; that stretch reads GGEIFPYLVVVIGLENVLVLT. The Cytoplasmic segment spans residues 366 to 401; that stretch reads KSVVSTPVDLEVKLRIAQGLSSESWSIMKNMATELG. Residues 402–422 form a helical membrane-spanning segment; that stretch reads IILIGYFTLVPAIQEFCLFAV. Position 423 (valine 423) is a topological domain, lumenal. A helical membrane pass occupies residues 424-444; it reads GLVSDFFLQMLFFTTVLSIDI. At 445-518 the chain is on the cytoplasmic side; it reads RRMELADLNK…FLARTRLAQR (74 aa). The ER export signal signature appears at 447–452; the sequence is MELADL. Residues lysine 454 and lysine 466 each participate in a glycyl lysine isopeptide (Lys-Gly) (interchain with G-Cter in ubiquitin) cross-link. Residues 519–539 traverse the membrane as a helical segment; that stretch reads LIMAGTVVWIGILVYTDPAGL. Residues 535–710 are loop-7; that stretch reads DPAGLRNYLA…QAHGDVTLYK (176 aa). The Lumenal portion of the chain corresponds to 540–709; it reads RNYLAAQVTE…VQAHGDVTLY (170 aa). The interval 579–615 is disordered; that stretch reads IFPPDAPKLPENQTSPGESPERGGPAEVVHDSPVPEV. 2 N-linked (GlcNAc...) asparagine glycosylation sites follow: asparagine 590 and asparagine 641. A disordered region spans residues 668–696; sequence EGRHPQDGRSAWPPPGPIPAGHWEAGPKG. A helical membrane pass occupies residues 710-730; sequence KVAALGLATGIVLVLLLLCLY. At 731-1279 the chain is on the cytoplasmic side; sequence RVLCPRNYGQ…YVPSVLEKLD (549 aa). The interval 731 to 1279 is interaction with SREBF2; the sequence is RVLCPRNYGQ…YVPSVLEKLD (549 aa). The stretch at 771–811 is one WD 1 repeat; that stretch reads VLRGHLMDIECLASDGMLLVSCCLAGHVCVWDAQTGDCLTR. The disordered stretch occupies residues 811–904; sequence RIPRPGRQRR…PRHRAVCGRS (94 aa). Serine 822, serine 838, and serine 851 each carry phosphoserine. Residues 877–891 show a composition bias toward polar residues; the sequence is IDTNFSAQPRSSQPT. Residues serine 907 and serine 937 each carry the phosphoserine modification. The segment at 931–962 is disordered; sequence PALRPPSPGPVLSQAPEDEGGSPEKGSPSLAW. WD repeat units follow at residues 952-1002 and 1005-1042; these read SPEK…LCCS and EVSS…ALSP. At arginine 1051 the chain carries Omega-N-methylarginine. 4 WD repeats span residues 1077–1114, 1117–1155, 1158–1195, and 1197–1235; these read AHQK…CLFT, GHSG…RVSH, AHRG…KFYS, and QQDL…LLQT.

Belongs to the WD repeat SCAP family. Membrane region forms a homotetramer. Component of the SCAP-SREBP complex (composed of SCAP and SREBF1/SREBP1 or SREBF2/SREBP2); interacts with SREBF1/SREBP1 or SREBF2/SREBP2 through its C-terminal cytoplasmic domain. Forms a ternary complex with INSIG1 or INSIG2 through its transmembrane domains at high sterol concentrations. Interacts with PAQR3; the interaction anchors the SCAP-SREBP complex to the Golgi apparatus in low cholesterol conditions. Interacts with the SEC23-SEC24 complex in a SAR1-GTP-dependent manner through an ER export signal in its third cytoplasmic loop. Interacts with RNF139; the interaction inhibits the interaction of SCAP with SEC24B and hampering the ER to Golgi transport of the SCAP-SREBP complex. Interacts with SPRING1. Post-translationally, ubiquitinated at Lys-454 and Lys-466. RNF145 triggers ubiquitination of SCAP, likely inhibiting SCAP-SREBP complex transport to the Golgi apparatus and the subsequent processing/maturation of SREBF2/SREBP2.

Its subcellular location is the endoplasmic reticulum membrane. It is found in the golgi apparatus membrane. The protein resides in the cytoplasmic vesicle. It localises to the COPII-coated vesicle membrane. Escort protein required for cholesterol as well as lipid homeostasis. Regulates export of the SCAP-SREBP complex from the endoplasmic reticulum to the Golgi upon low cholesterol, thereby regulating the processing of sterol regulatory element-binding proteins (SREBPs) SREBF1/SREBP1 and SREBF2/SREBP2. At high sterol concentrations, formation of a ternary complex with INSIG (INSIG1 or INSIG2) leads to mask the ER export signal in SCAP, promoting retention of the complex in the endoplasmic reticulum. Low sterol concentrations trigger release of INSIG, a conformational change in the SSD domain of SCAP, unmasking of the ER export signal, promoting recruitment into COPII-coated vesicles and transport of the SCAP-SREBP to the Golgi: in the Golgi, SREBPs are then processed, releasing the transcription factor fragment of SREBPs from the membrane, its import into the nucleus and up-regulation of LDLR, INSIG1 and the mevalonate pathway. Binds cholesterol via its SSD domain. This Homo sapiens (Human) protein is Sterol regulatory element-binding protein cleavage-activating protein.